We begin with the raw amino-acid sequence, 69 residues long: Large ribosomal subunit protein bL28 (69 aa).

Residues 1–27 form a disordered region; the sequence is MSRRCSVSGKGPLVGNNVSHANNKTKR.

Belongs to the bacterial ribosomal protein bL28 family.

In Sulfurovum sp. (strain NBC37-1), this protein is Large ribosomal subunit protein bL28.